The primary structure comprises 123 residues: Large ribosomal subunit protein uL14 (123 aa).

This sequence belongs to the universal ribosomal protein uL14 family. Part of the 50S ribosomal subunit. Forms a cluster with proteins L3 and L19. In the 70S ribosome, L14 and L19 interact and together make contacts with the 16S rRNA in bridges B5 and B8.

In terms of biological role, binds to 23S rRNA. Forms part of two intersubunit bridges in the 70S ribosome. In Blochmanniella pennsylvanica (strain BPEN), this protein is Large ribosomal subunit protein uL14.